Consider the following 133-residue polypeptide: ATP synthase epsilon chain (133 aa).

It belongs to the ATPase epsilon chain family. F-type ATPases have 2 components, CF(1) - the catalytic core - and CF(0) - the membrane proton channel. CF(1) has five subunits: alpha(3), beta(3), gamma(1), delta(1), epsilon(1). CF(0) has three main subunits: a, b and c.

Its subcellular location is the cell membrane. Its function is as follows. Produces ATP from ADP in the presence of a proton gradient across the membrane. The sequence is that of ATP synthase epsilon chain from Staphylococcus haemolyticus (strain JCSC1435).